Here is a 453-residue protein sequence, read N- to C-terminus: Tubulin delta chain (453 aa).

Ala143–Gly149 provides a ligand contact to GTP.

Belongs to the tubulin family. As to quaternary structure, found in a complex with TEDC1, TEDC2, TUBE1 and TUBD1.

Its subcellular location is the nucleus. The protein resides in the cytoplasm. The protein localises to the cytoskeleton. It localises to the microtubule organizing center. It is found in the centrosome. Its subcellular location is the centriole. The protein resides in the cell projection. The protein localises to the cilium. Functionally, acts as a positive regulator of hedgehog signaling and regulates ciliary function. The sequence is that of Tubulin delta chain (TUBD1) from Macaca fascicularis (Crab-eating macaque).